The primary structure comprises 114 residues: Iron-sulfur cluster insertion protein ErpA (114 aa).

Iron-sulfur cluster is bound by residues C42, C106, and C108.

This sequence belongs to the HesB/IscA family. Homodimer. The cofactor is iron-sulfur cluster.

Functionally, required for insertion of 4Fe-4S clusters for at least IspG. This Shigella boydii serotype 18 (strain CDC 3083-94 / BS512) protein is Iron-sulfur cluster insertion protein ErpA.